The chain runs to 476 residues: Amidophosphoribosyltransferase (476 aa).

The propeptide occupies 1 to 11 (MLAEIKGLNEE). C12 (nucleophile) is an active-site residue. The region spanning 12–231 (CGVFGIWGHE…PGEMLIINDE (220 aa)) is the Glutamine amidotransferase type-2 domain. Residue C247 participates in [4Fe-4S] cluster binding. Residues S294, D356, and D357 each contribute to the Mg(2+) site. Positions 393, 448, and 451 each coordinate [4Fe-4S] cluster.

This sequence in the C-terminal section; belongs to the purine/pyrimidine phosphoribosyltransferase family. Homotetramer. The cofactor is Mg(2+). It depends on [4Fe-4S] cluster as a cofactor.

The enzyme catalyses 5-phospho-beta-D-ribosylamine + L-glutamate + diphosphate = 5-phospho-alpha-D-ribose 1-diphosphate + L-glutamine + H2O. It functions in the pathway purine metabolism; IMP biosynthesis via de novo pathway; N(1)-(5-phospho-D-ribosyl)glycinamide from 5-phospho-alpha-D-ribose 1-diphosphate: step 1/2. Its activity is regulated as follows. Allosterically regulated; subject to end product regulation by purine nucleotides. Functionally, catalyzes the formation of phosphoribosylamine from phosphoribosylpyrophosphate (PRPP) and glutamine. This Bacillus subtilis (strain 168) protein is Amidophosphoribosyltransferase.